The primary structure comprises 445 residues: uncharacterized protein (445 aa).

This is an uncharacterized protein from Acanthamoeba polyphaga mimivirus (APMV).